The chain runs to 330 residues: MIKAAVVGASGYIGGELVRLLAMHPEVEITAITSRRFAGQKVHKVHPNLRGLDLRFTNTKEFDADVIFLAVPHGTSMEIIDDYLGSAKIIDMSADFRLREDLYREYYGEHKRPELIEEFVYGLPELHRKEIRKAELVANPGCNATATILALYPFRELTDEAIVDLKVSSSAGGRRENVASIHPERSHVVRVYKPYHHRHEGEVIQETGVKAAFTVHSVDIIRGLLATIYFRFEGSTRELLRKLLVYKDEPFVRLVTDKGGLQRFPDPKYVIGSNFADIGFAHDEENSRAIVLSAIDNLIKGGSGQAVQNMNLMFGLDERTGLNYYPVYPV.

NADP(+)-binding positions include 10–13 (SGYI) and 34–36 (SRR). Cys-142 is a catalytic residue. Asn-297 serves as a coordination point for NADP(+).

It belongs to the NAGSA dehydrogenase family. Type 1 subfamily. LysY sub-subfamily.

It is found in the cytoplasm. It carries out the reaction [amino-group carrier protein]-C-terminal-N-(1-carboxy-5-oxopentan-1-yl)-L-glutamine + phosphate + NADP(+) = [amino-group carrier protein]-C-terminal-N-(1-carboxy-5-phosphooxy-5-oxopentan-1-yl)-L-glutamine + NADPH + H(+). The catalysed reaction is [amino-group carrier protein]-C-terminal-gamma-(L-glutamyl-5-semialdehyde)-L-glutamate + phosphate + NADP(+) = [amino-group carrier protein]-C-terminal-gamma-(5-phospho-L-glutamyl)-L-glutamate + NADPH + H(+). It functions in the pathway amino-acid biosynthesis; L-lysine biosynthesis via AAA pathway; L-lysine from L-alpha-aminoadipate (Thermus route): step 3/5. Its pathway is amino-acid biosynthesis; L-arginine biosynthesis. Its function is as follows. Involved in both the arginine and lysine biosynthetic pathways. This is Putative [LysW]-L-2-aminoadipate/[LysW]-L-glutamate phosphate reductase from Thermococcus kodakarensis (strain ATCC BAA-918 / JCM 12380 / KOD1) (Pyrococcus kodakaraensis (strain KOD1)).